Consider the following 156-residue polypeptide: Protein-export protein SecB (156 aa).

This sequence belongs to the SecB family. Homotetramer, a dimer of dimers. One homotetramer interacts with 1 SecA dimer.

Its subcellular location is the cytoplasm. In terms of biological role, one of the proteins required for the normal export of preproteins out of the cell cytoplasm. It is a molecular chaperone that binds to a subset of precursor proteins, maintaining them in a translocation-competent state. It also specifically binds to its receptor SecA. The chain is Protein-export protein SecB from Serratia proteamaculans (strain 568).